Reading from the N-terminus, the 137-residue chain is Fluoride-specific ion channel FluC 1 (137 aa).

Helical transmembrane passes span 4–24 (LIYI…YYLG), 37–57 (LATL…TTYI), 67–87 (VITG…TFSV), and 98–118 (WGIA…MSGL). Positions 77 and 80 each coordinate Na(+).

The protein belongs to the fluoride channel Fluc/FEX (TC 1.A.43) family.

The protein localises to the cell membrane. The catalysed reaction is fluoride(in) = fluoride(out). Na(+) is not transported, but it plays an essential structural role and its presence is essential for fluoride channel function. Functionally, fluoride-specific ion channel. Important for reducing fluoride concentration in the cell, thus reducing its toxicity. The polypeptide is Fluoride-specific ion channel FluC 1 (Bacillus cereus (strain ZK / E33L)).